The following is a 502-amino-acid chain: ATP synthase subunit alpha (502 aa).

Residue 169–176 coordinates ATP; sequence GDRQTGKT.

The protein belongs to the ATPase alpha/beta chains family. F-type ATPases have 2 components, CF(1) - the catalytic core - and CF(0) - the membrane proton channel. CF(1) has five subunits: alpha(3), beta(3), gamma(1), delta(1), epsilon(1). CF(0) has three main subunits: a(1), b(2) and c(9-12). The alpha and beta chains form an alternating ring which encloses part of the gamma chain. CF(1) is attached to CF(0) by a central stalk formed by the gamma and epsilon chains, while a peripheral stalk is formed by the delta and b chains.

The protein resides in the cell membrane. The catalysed reaction is ATP + H2O + 4 H(+)(in) = ADP + phosphate + 5 H(+)(out). In terms of biological role, produces ATP from ADP in the presence of a proton gradient across the membrane. The alpha chain is a regulatory subunit. This is ATP synthase subunit alpha from Desulfitobacterium hafniense (strain Y51).